Consider the following 67-residue polypeptide: Probable Sec-independent protein translocase protein TatE (67 aa).

Residues Ile4 to Gly21 traverse the membrane as a helical segment. Residues Met43–Glu67 form a disordered region.

The protein belongs to the TatA/E family. TatE subfamily.

It is found in the cell inner membrane. Part of the twin-arginine translocation (Tat) system that transports large folded proteins containing a characteristic twin-arginine motif in their signal peptide across membranes. TatE shares overlapping functions with TatA. This chain is Probable Sec-independent protein translocase protein TatE, found in Enterobacter lignolyticus (strain SCF1).